The following is a 462-amino-acid chain: Amino-acid permease AapA (462 aa).

A run of 12 helical transmembrane segments spans residues 27-47, 48-68, 96-116, 134-154, 160-180, 209-229, 252-272, 279-299, 343-363, 366-386, 410-430, and 435-455; these read LMAI…KSIH, FAGP…FFIM, AAFI…MADL, LPGL…VKLF, WFAL…ILLI, GFIL…LVGL, ILLF…WNVL, FVQV…NFVV, ALFF…LMPE, FTLI…ITVI, PLSN…LALA, and IALF…KVQT.

This sequence belongs to the amino acid-polyamine-organocation (APC) superfamily.

Its subcellular location is the cell membrane. Probable amino-acid or metabolite transport protein. The chain is Amino-acid permease AapA (aapA) from Bacillus subtilis (strain 168).